A 533-amino-acid chain; its full sequence is Protein trichome birefringence-like 18 (533 aa).

A helical; Signal-anchor for type II membrane protein transmembrane segment spans residues 21 to 41 (VSTVAIAIGGLASFFVFGLLL). Positions 93–171 (SDSSSGLPVV…PDDVSETASA (79 aa)) are disordered. The span at 113–154 (SSDRKLETPLTQEKEDLVSSDITEKTDVQSGERETNVSKAED) shows a compositional bias: basic and acidic residues. The GDS motif motif lies at 248 to 250 (GDS). A disordered region spans residues 475-502 (HDGHPGPFRSPDPNKITKRGPDGRPPPQ). Positions 503–517 (DCLHWCMPGPVDTWN) match the DCXHWCLPGXXDXWN motif motif.

It belongs to the PC-esterase family. TBL subfamily.

The protein resides in the membrane. Its function is as follows. May act as a bridging protein that binds pectin and other cell wall polysaccharides. Probably involved in maintaining esterification of pectins. May be involved in the specific O-acetylation of cell wall polymers. The polypeptide is Protein trichome birefringence-like 18 (TBL18) (Arabidopsis thaliana (Mouse-ear cress)).